A 356-amino-acid chain; its full sequence is Histidinol-phosphate aminotransferase (356 aa).

At Lys210 the chain carries N6-(pyridoxal phosphate)lysine.

This sequence belongs to the class-II pyridoxal-phosphate-dependent aminotransferase family. Histidinol-phosphate aminotransferase subfamily. Homodimer. Pyridoxal 5'-phosphate serves as cofactor.

The enzyme catalyses L-histidinol phosphate + 2-oxoglutarate = 3-(imidazol-4-yl)-2-oxopropyl phosphate + L-glutamate. It participates in amino-acid biosynthesis; L-histidine biosynthesis; L-histidine from 5-phospho-alpha-D-ribose 1-diphosphate: step 7/9. This chain is Histidinol-phosphate aminotransferase (hisC), found in Acetobacter pasteurianus (Acetobacter turbidans).